The primary structure comprises 440 residues: Murein DD-endopeptidase MepM (440 aa).

A helical membrane pass occupies residues 21-40; the sequence is VMLGSLTVLTLAVAVWRPYV. The region spanning 96 to 141 is the LysM domain; that stretch reads HEYVVSTGDTLSSILNQYGIDMGDITQLAAADKELRNLKIGQQLSW. Residue His314 participates in Zn(2+) binding.

This sequence belongs to the peptidase M23B family. It depends on Zn(2+) as a cofactor.

It is found in the cell membrane. Its pathway is cell wall biogenesis; cell wall polysaccharide biosynthesis. Its function is as follows. A murein DD-endopeptidase with specificity for D-Ala-meso-diaminopimelic acid (mDAP) cross-links. Its role is probably to cleave D-Ala-mDAP cross-links to allow insertion of new glycans and thus cell wall expansion. Functionally redundant with MepM and MepH. This is Murein DD-endopeptidase MepM (mepM) from Escherichia coli O6:H1 (strain CFT073 / ATCC 700928 / UPEC).